The primary structure comprises 254 residues: Trans-aconitate 2-methyltransferase (254 aa).

It belongs to the methyltransferase superfamily. Tam family.

The protein resides in the cytoplasm. It catalyses the reaction trans-aconitate + S-adenosyl-L-methionine = (E)-3-(methoxycarbonyl)pent-2-enedioate + S-adenosyl-L-homocysteine. Catalyzes the S-adenosylmethionine monomethyl esterification of trans-aconitate. The sequence is that of Trans-aconitate 2-methyltransferase from Mycobacterium sp. (strain JLS).